The sequence spans 344 residues: Lipase chaperone (344 aa).

A helical transmembrane segment spans residues 14–34 (AVVYGAVGLAAIAGVAMWSGA). The disordered stretch occupies residues 37 to 78 (HGGTGASGEPPDASAARGPAAAPPQAAVPASTSLPPSLAGSS). Residues 43–78 (SGEPPDASAARGPAAAPPQAAVPASTSLPPSLAGSS) are compositionally biased toward low complexity.

It belongs to the lipase chaperone family.

The protein localises to the cell inner membrane. May be involved in the folding of the extracellular lipase during its passage through the periplasm. The polypeptide is Lipase chaperone (lifO) (Burkholderia cepacia (Pseudomonas cepacia)).